The primary structure comprises 319 residues: Thioredoxin reductase (319 aa).

36 to 43 is an FAD binding site; the sequence is TGTNKGGQ. A disulfide bond links Cys-136 and Cys-139. FAD is bound at residue 288 to 297; sequence DVIDHVYRQA.

Belongs to the class-II pyridine nucleotide-disulfide oxidoreductase family. In terms of assembly, homodimer. FAD is required as a cofactor.

It is found in the cytoplasm. The enzyme catalyses [thioredoxin]-dithiol + NADP(+) = [thioredoxin]-disulfide + NADPH + H(+). The polypeptide is Thioredoxin reductase (trxB) (Buchnera aphidicola subsp. Acyrthosiphon pisum (strain APS) (Acyrthosiphon pisum symbiotic bacterium)).